We begin with the raw amino-acid sequence, 224 residues long: V-type proton ATPase subunit S1-like protein (224 aa).

The helical transmembrane segment at 147–167 (PAFLIGLAMSLILLLVLAYAL) threads the bilayer.

This sequence belongs to the vacuolar ATPase subunit S1 family.

It is found in the membrane. The chain is V-type proton ATPase subunit S1-like protein (ATP6AP1L) from Homo sapiens (Human).